Consider the following 321-residue polypeptide: Fe-S cluster assembly protein DRE2 (321 aa).

Positions M1–E140 are N-terminal SAM-like domain. Over residues I128–V138 the composition is skewed to polar residues. The interval I128–Q166 is disordered. The segment at E140–E177 is linker. [2Fe-2S] cluster-binding residues include C202, C217, C220, and C222. A fe-S binding site A region spans residues C202–C222. Residues Q239–N263 form a disordered region. Positions 283, 286, 294, and 297 each coordinate [4Fe-4S] cluster. 2 short sequence motifs (cx2C motif) span residues C283–C286 and C294–C297. Residues C283–C297 are fe-S binding site B.

It belongs to the anamorsin family. As to quaternary structure, monomer. Interacts with TAH18. Interacts with MIA40. It depends on [2Fe-2S] cluster as a cofactor. [4Fe-4S] cluster serves as cofactor.

The protein resides in the cytoplasm. Its subcellular location is the mitochondrion intermembrane space. Component of the cytosolic iron-sulfur (Fe-S) protein assembly (CIA) machinery required for the maturation of extramitochondrial Fe-S proteins. Part of an electron transfer chain functioning in an early step of cytosolic Fe-S biogenesis, facilitating the de novo assembly of a [4Fe-4S] cluster on the scaffold complex CFD1-NBP35. Electrons are transferred to DRE2 from NADPH via the FAD- and FMN-containing protein TAH18. TAH18-DRE2 are also required for the assembly of the diferric tyrosyl radical cofactor of ribonucleotide reductase (RNR), probably by providing electrons for reduction during radical cofactor maturation in the catalytic small subunit RNR2. The polypeptide is Fe-S cluster assembly protein DRE2 (Malassezia globosa (strain ATCC MYA-4612 / CBS 7966) (Dandruff-associated fungus)).